The primary structure comprises 427 residues: Enolase 2 (427 aa).

Glutamine 163 provides a ligand contact to (2R)-2-phosphoglycerate. Glutamate 205 functions as the Proton donor in the catalytic mechanism. Residues aspartate 242, glutamate 285, and aspartate 312 each coordinate Mg(2+). (2R)-2-phosphoglycerate contacts are provided by lysine 337, arginine 366, serine 367, and lysine 388. Lysine 337 (proton acceptor) is an active-site residue.

Belongs to the enolase family. In terms of assembly, component of the RNA degradosome, a multiprotein complex involved in RNA processing and mRNA degradation. The cofactor is Mg(2+).

The protein localises to the cytoplasm. It is found in the secreted. Its subcellular location is the cell surface. It carries out the reaction (2R)-2-phosphoglycerate = phosphoenolpyruvate + H2O. It functions in the pathway carbohydrate degradation; glycolysis; pyruvate from D-glyceraldehyde 3-phosphate: step 4/5. Its function is as follows. Catalyzes the reversible conversion of 2-phosphoglycerate (2-PG) into phosphoenolpyruvate (PEP). It is essential for the degradation of carbohydrates via glycolysis. This chain is Enolase 2, found in Methylococcus capsulatus (strain ATCC 33009 / NCIMB 11132 / Bath).